The chain runs to 922 residues: Alpha-actinin, sarcomeric (922 aa).

The interval 1–252 is actin-binding; the sequence is MMENGGYVGQ…IMTYVSCYYH (252 aa). Calponin-homology (CH) domains lie at 36-140 and 149-255; these read KQQK…LRFA and MTAK…HAFQ. 4 Spectrin repeats span residues 253-393, 394-508, 509-629, and 630-742; these read AFQG…MVSD, ITNS…RCQR, ICDQ…SADL, and ISRK…TMET. EF-hand domains follow at residues 776–811 and 817–852; these read EQLT…LGYS and QGDM…ESTD. Ca(2+) contacts are provided by Asp-789, Asn-791, Thr-793, Arg-795, and Glu-800.

This sequence belongs to the alpha-actinin family. In terms of assembly, homodimer; antiparallel.

Functionally, F-actin cross-linking protein which is thought to anchor actin to a variety of intracellular structures. This is a bundling protein. This Anopheles gambiae (African malaria mosquito) protein is Alpha-actinin, sarcomeric (Actn).